We begin with the raw amino-acid sequence, 575 residues long: Septation ring formation regulator EzrA (575 aa).

The Extracellular segment spans residues Met1–Tyr8. The helical transmembrane segment at Leu9–Leu27 threads the bilayer. The Cytoplasmic portion of the chain corresponds to Arg28–Phe575. Coiled-coil stretches lie at residues Leu105–Leu191, Leu265–Ile301, Val354–Asp416, and Thr456–Ala526.

Belongs to the EzrA family.

The protein resides in the cell membrane. In terms of biological role, negative regulator of FtsZ ring formation; modulates the frequency and position of FtsZ ring formation. Inhibits FtsZ ring formation at polar sites. Interacts either with FtsZ or with one of its binding partners to promote depolymerization. This Streptococcus pneumoniae (strain ATCC BAA-255 / R6) protein is Septation ring formation regulator EzrA.